The sequence spans 420 residues: Tyrosine--tRNA ligase (420 aa).

An L-tyrosine-binding site is contributed by Tyr33. Residues 38–47 carry the 'HIGH' region motif; sequence PTADSLHIGH. L-tyrosine-binding residues include Tyr168 and Gln172. The short motif at 231 to 235 is the 'KMSKS' region element; sequence KFGKT. Lys234 is an ATP binding site. One can recognise an S4 RNA-binding domain in the interval 353–419; it reads MLLVDALIKV…GKKNYYLVKL (67 aa).

The protein belongs to the class-I aminoacyl-tRNA synthetase family. TyrS type 1 subfamily. As to quaternary structure, homodimer.

It is found in the cytoplasm. It carries out the reaction tRNA(Tyr) + L-tyrosine + ATP = L-tyrosyl-tRNA(Tyr) + AMP + diphosphate + H(+). Catalyzes the attachment of tyrosine to tRNA(Tyr) in a two-step reaction: tyrosine is first activated by ATP to form Tyr-AMP and then transferred to the acceptor end of tRNA(Tyr). The sequence is that of Tyrosine--tRNA ligase from Desulfitobacterium hafniense (strain Y51).